The chain runs to 404 residues: Argininosuccinate synthase (404 aa).

7–15 (AYSGGLDTS) contributes to the ATP binding site. 2 residues coordinate L-citrulline: Tyr-85 and Ser-90. Gly-115 is an ATP binding site. Residues Thr-117, Asn-121, and Asp-122 each coordinate L-aspartate. Asn-121 contacts L-citrulline. Residues Arg-125, Ser-178, Ser-187, Glu-264, and Tyr-276 each coordinate L-citrulline.

Belongs to the argininosuccinate synthase family. Type 1 subfamily. In terms of assembly, homotetramer.

The protein resides in the cytoplasm. The enzyme catalyses L-citrulline + L-aspartate + ATP = 2-(N(omega)-L-arginino)succinate + AMP + diphosphate + H(+). Its pathway is amino-acid biosynthesis; L-arginine biosynthesis; L-arginine from L-ornithine and carbamoyl phosphate: step 2/3. The sequence is that of Argininosuccinate synthase from Rhodopirellula baltica (strain DSM 10527 / NCIMB 13988 / SH1).